The chain runs to 178 residues: Interleukin-10 (178 aa).

The N-terminal stretch at 1 to 18 (MHSSALLCCLVLLTGVRA) is a signal peptide. 2 disulfides stabilise this stretch: cysteine 30–cysteine 126 and cysteine 80–cysteine 132. The N-linked (GlcNAc...) asparagine glycan is linked to asparagine 134.

Belongs to the IL-10 family. In terms of assembly, homodimer. Interacts with IL10RA and IL10RB.

Its subcellular location is the secreted. Its function is as follows. Major immune regulatory cytokine that acts on many cells of the immune system where it has profound anti-inflammatory functions, limiting excessive tissue disruption caused by inflammation. Mechanistically, IL10 binds to its heterotetrameric receptor comprising IL10RA and IL10RB leading to JAK1 and STAT2-mediated phosphorylation of STAT3. In turn, STAT3 translocates to the nucleus where it drives expression of anti-inflammatory mediators. Targets antigen-presenting cells (APCs) such as macrophages and monocytes and inhibits their release of pro-inflammatory cytokines including granulocyte-macrophage colony-stimulating factor /GM-CSF, granulocyte colony-stimulating factor/G-CSF, IL-1 alpha, IL-1 beta, IL-6, IL-8 and TNF-alpha. Also interferes with antigen presentation by reducing the expression of MHC-class II and co-stimulatory molecules, thereby inhibiting their ability to induce T cell activation. In addition, controls the inflammatory response of macrophages by reprogramming essential metabolic pathways including mTOR signaling. The polypeptide is Interleukin-10 (IL10) (Macaca nemestrina (Pig-tailed macaque)).